Consider the following 322-residue polypeptide: Malate dehydrogenase (322 aa).

Residues 10–15 (GSGQIG) and D34 each bind NAD(+). Substrate-binding residues include R83 and R89. NAD(+)-binding positions include N96 and 119–121 (ITN). 2 residues coordinate substrate: N121 and R152. Catalysis depends on H176, which acts as the Proton acceptor.

It belongs to the LDH/MDH superfamily. MDH type 3 family.

The enzyme catalyses (S)-malate + NAD(+) = oxaloacetate + NADH + H(+). Catalyzes the reversible oxidation of malate to oxaloacetate. The chain is Malate dehydrogenase from Bradyrhizobium sp. (strain BTAi1 / ATCC BAA-1182).